Reading from the N-terminus, the 322-residue chain is Probable cell division protein WhiA (322 aa).

The H-T-H motif DNA-binding region spans 279–312; the sequence is SLKELGELWTPPVGKSGVNHRIRKIERLAEKLRS.

It belongs to the WhiA family.

Its function is as follows. Involved in cell division and chromosome segregation. This Desulforamulus reducens (strain ATCC BAA-1160 / DSM 100696 / MI-1) (Desulfotomaculum reducens) protein is Probable cell division protein WhiA.